Reading from the N-terminus, the 239-residue chain is Probable transcriptional regulatory protein Aave_3203 (239 aa).

The disordered stretch occupies residues 1–20 (MAGHSKWANIQHRKGRQDEK).

The protein belongs to the TACO1 family.

It is found in the cytoplasm. This is Probable transcriptional regulatory protein Aave_3203 from Paracidovorax citrulli (strain AAC00-1) (Acidovorax citrulli).